The sequence spans 378 residues: Phospho-N-acetylmuramoyl-pentapeptide-transferase (378 aa).

The next 11 membrane-spanning stretches (helical) occupy residues 26–46 (LFRLLAIGLLIVTIAYDTGAN), 57–77 (LPWLVSFALVAVLGMAVVPLL), 103–123 (MGGIFFVPTGLGLAFLWTGFA), 127–147 (LSPTVGAIALLVLWYAAIGWW), 171–191 (GIGAALFCAWLVASDPTATVV), 195–215 (WGWVWPLGMAFIPLAIFVPMA), 225–245 (GLDGLAGGTGAIALLTLGIIL), 247–267 (PYPDLQILAVVMSGACLGFLW), 275–295 (VFMGDTGSLALGAVLAGIGLA), 302–322 (LLIVSGLFFVESLSVIAQVLY), and 356–376 (IVRTFYGVVALLGLLCVLLQW).

This sequence belongs to the glycosyltransferase 4 family. MraY subfamily. The cofactor is Mg(2+).

The protein resides in the cell inner membrane. The enzyme catalyses UDP-N-acetyl-alpha-D-muramoyl-L-alanyl-gamma-D-glutamyl-meso-2,6-diaminopimeloyl-D-alanyl-D-alanine + di-trans,octa-cis-undecaprenyl phosphate = di-trans,octa-cis-undecaprenyl diphospho-N-acetyl-alpha-D-muramoyl-L-alanyl-D-glutamyl-meso-2,6-diaminopimeloyl-D-alanyl-D-alanine + UMP. It participates in cell wall biogenesis; peptidoglycan biosynthesis. Functionally, catalyzes the initial step of the lipid cycle reactions in the biosynthesis of the cell wall peptidoglycan: transfers peptidoglycan precursor phospho-MurNAc-pentapeptide from UDP-MurNAc-pentapeptide onto the lipid carrier undecaprenyl phosphate, yielding undecaprenyl-pyrophosphoryl-MurNAc-pentapeptide, known as lipid I. The sequence is that of Phospho-N-acetylmuramoyl-pentapeptide-transferase from Thermosynechococcus vestitus (strain NIES-2133 / IAM M-273 / BP-1).